The primary structure comprises 330 residues: DNA-directed RNA polymerase subunit alpha (330 aa).

Residues 1 to 231 (MQTNLLKPKA…EQLAVFAQLE (231 aa)) are alpha N-terminal domain (alpha-NTD). The alpha C-terminal domain (alpha-CTD) stretch occupies residues 250-330 (FDPILLRPVD…NWPPAGLDKR (81 aa)).

The protein belongs to the RNA polymerase alpha chain family. In terms of assembly, homodimer. The RNAP catalytic core consists of 2 alpha, 1 beta, 1 beta' and 1 omega subunit. When a sigma factor is associated with the core the holoenzyme is formed, which can initiate transcription.

It carries out the reaction RNA(n) + a ribonucleoside 5'-triphosphate = RNA(n+1) + diphosphate. DNA-dependent RNA polymerase catalyzes the transcription of DNA into RNA using the four ribonucleoside triphosphates as substrates. This is DNA-directed RNA polymerase subunit alpha from Acidovorax ebreus (strain TPSY) (Diaphorobacter sp. (strain TPSY)).